The chain runs to 242 residues: MIIPALDVLQNQIVRLYQGKYETVQFYPFELGARLKEYADSGAGKLHLVDLEGARDPSKKQWQHIQAATKALNVPYQVGGGIRCEQDVSDWLKAGANQVVIGSMAVEKREQVKAWIEQFGAEHFVIALDVNKTATGWAPATHGWLTESEFGLLELVDFYANLGVIDFLCTDISKDGTMTGPSFALYEDLIKHNSTIKVQASGGVSSLDDIKKLKELGIGGIILGKSLLDGAFSVEEALAVTR.

Asp7 (proton acceptor) is an active-site residue. Asp129 acts as the Proton donor in catalysis.

It belongs to the HisA/HisF family.

It localises to the cytoplasm. The enzyme catalyses 1-(5-phospho-beta-D-ribosyl)-5-[(5-phospho-beta-D-ribosylamino)methylideneamino]imidazole-4-carboxamide = 5-[(5-phospho-1-deoxy-D-ribulos-1-ylimino)methylamino]-1-(5-phospho-beta-D-ribosyl)imidazole-4-carboxamide. The protein operates within amino-acid biosynthesis; L-histidine biosynthesis; L-histidine from 5-phospho-alpha-D-ribose 1-diphosphate: step 4/9. This chain is 1-(5-phosphoribosyl)-5-[(5-phosphoribosylamino)methylideneamino] imidazole-4-carboxamide isomerase, found in Pseudoalteromonas translucida (strain TAC 125).